The following is an 81-amino-acid chain: ATP synthase subunit c (81 aa).

The next 2 membrane-spanning stretches (helical) occupy residues 5 to 25 (IAAGALIGGGLIMAGGAIGAG) and 57 to 77 (VGLVEAAYFINLAFMALFVFA).

It belongs to the ATPase C chain family. F-type ATPases have 2 components, F(1) - the catalytic core - and F(0) - the membrane proton channel. F(1) has five subunits: alpha(3), beta(3), gamma(1), delta(1), epsilon(1). F(0) has three main subunits: a(1), b(2) and c(10-14). The alpha and beta chains form an alternating ring which encloses part of the gamma chain. F(1) is attached to F(0) by a central stalk formed by the gamma and epsilon chains, while a peripheral stalk is formed by the delta and b chains.

The protein localises to the cell membrane. F(1)F(0) ATP synthase produces ATP from ADP in the presence of a proton or sodium gradient. F-type ATPases consist of two structural domains, F(1) containing the extramembraneous catalytic core and F(0) containing the membrane proton channel, linked together by a central stalk and a peripheral stalk. During catalysis, ATP synthesis in the catalytic domain of F(1) is coupled via a rotary mechanism of the central stalk subunits to proton translocation. In terms of biological role, key component of the F(0) channel; it plays a direct role in translocation across the membrane. A homomeric c-ring of between 10-14 subunits forms the central stalk rotor element with the F(1) delta and epsilon subunits. In Mycolicibacterium gilvum (strain PYR-GCK) (Mycobacterium gilvum (strain PYR-GCK)), this protein is ATP synthase subunit c.